Reading from the N-terminus, the 202-residue chain is 7-cyano-7-deazaguanine synthase 1 (202 aa).

7 to 17 (MSGGLDSSSAA) contacts ATP. Zn(2+) is bound by residues C166, C174, C177, and C180.

Belongs to the QueC family. Zn(2+) is required as a cofactor.

The enzyme catalyses 7-carboxy-7-deazaguanine + NH4(+) + ATP = 7-cyano-7-deazaguanine + ADP + phosphate + H2O + H(+). Its pathway is purine metabolism; 7-cyano-7-deazaguanine biosynthesis. Functionally, catalyzes the ATP-dependent conversion of 7-carboxy-7-deazaguanine (CDG) to 7-cyano-7-deazaguanine (preQ(0)). This chain is 7-cyano-7-deazaguanine synthase 1 (queC1), found in Sulfurisphaera tokodaii (strain DSM 16993 / JCM 10545 / NBRC 100140 / 7) (Sulfolobus tokodaii).